The sequence spans 767 residues: Probable ubiquitin carboxyl-terminal hydrolase creB (767 aa).

Residues 49 to 462 (YGMENYGNTC…CAYVLFYQET (414 aa)) form the USP domain. Cys58 functions as the Nucleophile in the catalytic mechanism. Disordered regions lie at residues 107-140 (EAEAQAEKQKAANAQRPGMPPNPQQKPEDKDSPE) and 232-263 (ASKQPPIEKSLPAPETADSVDQSSSTGSKTPN). Polar residues predominate over residues 250 to 263 (SVDQSSSTGSKTPN). The active-site Proton acceptor is His413. Residues 490–767 (LKQNGFPQSP…LRKKSFSILS (278 aa)) are disordered. Low complexity-rich tracts occupy residues 540 to 554 (ESAPFSPLSPLSPLS) and 564 to 573 (ERVTTVATPP). A coiled-coil region spans residues 574–641 (KNDALAKKER…ASKAEEDRRL (68 aa)). Positions 577–650 (ALAKKERARE…LSHENGKEKQ (74 aa)) are enriched in basic and acidic residues. The span at 656–667 (RLKRGSKSLSHR) shows a compositional bias: basic residues. The segment covering 690–700 (STLSQTGPTSE) has biased composition (polar residues). Positions 701–713 (QQQQQQQQQQQQQ) are enriched in low complexity. Positions 731–749 (TIREDEQVNHKDSKHERTG) are enriched in basic and acidic residues. Basic residues predominate over residues 750–767 (HGKWRSFSLRKKSFSILS).

It belongs to the peptidase C19 family. Interacts with creA, creC and qutD.

The enzyme catalyses Thiol-dependent hydrolysis of ester, thioester, amide, peptide and isopeptide bonds formed by the C-terminal Gly of ubiquitin (a 76-residue protein attached to proteins as an intracellular targeting signal).. In terms of biological role, ubiquitin thioesterase component of the regulatory network controlling carbon source utilization through ubiquitination and deubiquitination involving creA, creB, creC, creD and acrB. Deubiquitinates the creA catabolic repressor and the quinate permease qutD. Also plays a role in response to carbon starvation and the control of extracellular proteases activity. This Aspergillus fumigatus (strain CBS 144.89 / FGSC A1163 / CEA10) (Neosartorya fumigata) protein is Probable ubiquitin carboxyl-terminal hydrolase creB (creB).